A 37-amino-acid polypeptide reads, in one-letter code: Large ribosomal subunit protein bL36A (37 aa).

This sequence belongs to the bacterial ribosomal protein bL36 family.

In Clavibacter sepedonicus (Clavibacter michiganensis subsp. sepedonicus), this protein is Large ribosomal subunit protein bL36A.